The primary structure comprises 166 residues: MLRGVLGKTFRLVGYTIQYGCIAHCAFEYVGGVVMCSGPSMEPTIQNSDIVFAENLSRHFYGIQRGDIVIAKSPSDPKSNICKRVIGLEGDKILTTSPSDFFKSHSYVPMGHVWLEGDNLQNSTDSRCYGPIPYGLIRGRIFFKIWPLSDFGFLRASPNGHRFSDD.

Catalysis depends on residues Ser-40 and Lys-83.

This sequence belongs to the peptidase S26 family. IMP1 subfamily. As to quaternary structure, heterodimer of 2 subunits, IMMPL1 and IMMPL2.

Its subcellular location is the mitochondrion inner membrane. Its function is as follows. Catalyzes the removal of transit peptides required for the targeting of proteins from the mitochondrial matrix, across the inner membrane, into the inter-membrane space. Known to process the nuclear encoded protein DIABLO. This Homo sapiens (Human) protein is Mitochondrial inner membrane protease subunit 1 (IMMP1L).